Here is a 645-residue protein sequence, read N- to C-terminus: 1-deoxy-D-xylulose-5-phosphate synthase (645 aa).

Thiamine diphosphate is bound by residues H87 and 128-130 (GHS). A Mg(2+)-binding site is contributed by D159. Thiamine diphosphate is bound by residues 160-161 (GA), N188, F295, and E384. N188 provides a ligand contact to Mg(2+).

Belongs to the transketolase family. DXPS subfamily. In terms of assembly, homodimer. Mg(2+) is required as a cofactor. Requires thiamine diphosphate as cofactor.

It carries out the reaction D-glyceraldehyde 3-phosphate + pyruvate + H(+) = 1-deoxy-D-xylulose 5-phosphate + CO2. It participates in metabolic intermediate biosynthesis; 1-deoxy-D-xylulose 5-phosphate biosynthesis; 1-deoxy-D-xylulose 5-phosphate from D-glyceraldehyde 3-phosphate and pyruvate: step 1/1. Catalyzes the acyloin condensation reaction between C atoms 2 and 3 of pyruvate and glyceraldehyde 3-phosphate to yield 1-deoxy-D-xylulose-5-phosphate (DXP). The protein is 1-deoxy-D-xylulose-5-phosphate synthase of Alcanivorax borkumensis (strain ATCC 700651 / DSM 11573 / NCIMB 13689 / SK2).